The chain runs to 650 residues: Probable ATP-dependent RNA helicase DDX17 (650 aa).

Residues 1 to 38 (MRGGGFGDRDRDRDRGGFGARGGSGLPPKKFGNPGERL) form a disordered region. A compositionally biased stretch (basic and acidic residues) spans 7-16 (GDRDRDRDRG). Residues Lys29, Lys30, and Lys42 each carry the N6-acetyllysine modification. Lys50 participates in a covalent cross-link: Glycyl lysine isopeptide (Lys-Gly) (interchain with G-Cter in SUMO); alternate. Lys50 is covalently cross-linked (Glycyl lysine isopeptide (Lys-Gly) (interchain with G-Cter in SUMO1); alternate). Lys50 participates in a covalent cross-link: Glycyl lysine isopeptide (Lys-Gly) (interchain with G-Cter in SUMO2); alternate. The short motif at 92–120 (FAFHHANFPQYVMDVLMDQHFTEPTPIQC) is the Q motif element. The 176-residue stretch at 123-298 (FPLALSGRDM…EDFLRDYTQI (176 aa)) folds into the Helicase ATP-binding domain. 136 to 143 (AQTGSGKT) is a binding site for ATP. The DEAD box signature appears at 246-249 (DEAD). Residues 326 to 473 (KLIQLMEEIM…AINPKLMQLV (148 aa)) enclose the Helicase C-terminal domain. Residue Thr444 is modified to Phosphothreonine. Residue Lys449 forms a Glycyl lysine isopeptide (Lys-Gly) (interchain with G-Cter in SUMO2) linkage. Residues 468-650 (KLMQLVDHRG…PPPPPPPSRK (183 aa)) form a transactivation domain region. Disordered stretches follow at residues 472–543 (LVDH…YGSP) and 583–650 (ASST…PSRK). Positions 489–499 (RTTSSANNPNL) are enriched in polar residues. Basic and acidic residues predominate over residues 504–531 (ECDRRLRGVKDGGRRDSTSYRDRSETDR). Positions 583–609 (ASSTASAGRSSQSSSQQFSGIGRSGQQ) are enriched in low complexity. Arg605 carries the omega-N-methylarginine modification. Residues 610-619 (PQPLMSQQFA) are compositionally biased toward polar residues. A compositionally biased stretch (pro residues) spans 638–650 (YPPPPPPPPPSRK). The interaction with YAP1 stretch occupies residues 639–647 (PPPPPPPPP).

This sequence belongs to the DEAD box helicase family. DDX5/DBP2 subfamily. Interacts with DDX5 in an RNA-independent manner. Interacts with CDK9 transcription elongation complex under basal conditions. Following cell stimulation with poly(I:C), a synthetic double-stranded RNA mimicking viral infection, the interaction with CDK9 is decreased. Interacts with ESR1 in an estrogen-independent manner. Interacts with HNRNPH1; this interaction is important for the regulation of alternative splicing on G-quadruplex structures. At high, but not low, cell density, interacts with DROSHA and DGCR8, the core components of the microprocessor complex involved in the maturation of primary microRNAs (pri-miRNAs) into pre-miRNAs. The interaction with DGCR8 is reduced during mitosis. At low, but not high, cell density, interacts with YAP1 and with its paralog, WWTR1/TAZ. Interactions with DROSHA and YAP1 are mutually exclusive. In vitro, the pre-miRNA processing activity of the DDX17-containing microprocessor complex is weaker than that of the DROSHA/DGCR8 microprocessor complex. Interacts with UPF3B. Interacts with NFAT5; this interaction leads to DDX17 recruitment to LNC2 and S100A4 promoters and NFAT5-mediated DDX17-enhanced transactivation. Interacts with HDAC1, HDAC2 and HDAC3; this interaction with HDAC1 and HDAC3, but not HDAC2, depends upon DDX17 acetylation. Interacts with ZC3HAV1 (via N-terminal domain) in an RNA-independent manner. Interacts with EXOSC3/RRP40 and EXOSC5/RRP46; this interaction may be indirect and mediated by ZC3HAV1-binding. Interacts with EP300; this interaction leads to acetylation at lysine residues. Interacts with CREBBP/CBP and KAT2B/P/CAF. Directly interacts with CTNNB1. Interacts with MYOD1. Interacts with TP53. Interacts with DCP1A in an RNA-independent manner. Interacts with DCP2 in an RNA-dependent manner. Interacts with DHX36; this interaction occurs in a RNA-dependent manner. Interacts with ERCC6. Sumoylation significantly increases stability. It also promotes interaction specifically with HDAC1 (but not HDAC2, nor HDAC3) and strongly stimulates ESR1 and TP53 coactivation. In terms of processing, acetylation at lysine residues stabilizes the protein, stimulates interaction with HDAC1 and HDAC3, but not HDAC2, and represses ESR1 and TP53 coactivation activity.

It localises to the nucleus. The protein localises to the nucleolus. The protein resides in the cytoplasm. It is found in the cytosol. It catalyses the reaction ATP + H2O = ADP + phosphate + H(+). In terms of biological role, as an RNA helicase, unwinds RNA and alters RNA structures through ATP binding and hydrolysis. Involved in multiple cellular processes, including pre-mRNA splicing, alternative splicing, ribosomal RNA processing and miRNA processing, as well as transcription regulation. Regulates the alternative splicing of exons exhibiting specific features. This function requires the RNA helicase activity. Affects NFAT5 and histone macro-H2A.1/MACROH2A1 alternative splicing in a CDK9-dependent manner. Affects splicing of mediators of steroid hormone signaling pathway, including kinases that phosphorylates ESR1 and transcriptional regulators. By acting splicing of regulatory factors, participates in ESR1 and AR stabilization. Promotes the inclusion of specific AC-rich alternative exons in CD44 transcripts. In myoblasts and epithelial cells, cooperates with HNRNPH1 to control the splicing of specific subsets of exons. In addition to binding mature mRNAs, also interacts with certain pri-microRNAs, including MIR132/miR-132, and stabilizes the primary transcript. Also participates in the MIR132 processing, resulting in significantly higher levels of mature MIR132 than MIR212 despite the fact that both are cotranscribed and co-regulated. Binding of pri-microRNAs may occur on the 3' segment flanking the stem loop via the 5'-[ACG]CAUC[ACU]-3' consensus sequence. Participates in MYC down-regulation at high cell density through the production of MYC-targeting microRNAs. Along with DDX5, may be involved in the processing of the 32S intermediate into the mature 28S rRNA. Promoter-specific transcription regulator, functioning as a coactivator or corepressor depending on the context of the promoter and the transcriptional complex in which it exists. Enhances NFAT5 transcriptional activity. Synergizes with TP53 in the activation of the MDM2 promoter; this activity requires acetylation on lysine residues. May also coactivate MDM2 transcription through a TP53-independent pathway. Coactivates MMP7 transcription. Along with CTNNB1, coactivates MYC, JUN, FOSL1 and cyclin D1/CCND1 transcription. Alone or in combination with DDX5 and/or SRA1 non-coding RNA, plays a critical role in promoting the assembly of proteins required for the formation of the transcription initiation complex and chromatin remodeling leading to coactivation of MYOD1-dependent transcription. This helicase-independent activity is required for skeletal muscle cells to properly differentiate into myotubes. During epithelial-to-mesenchymal transition, coregulates SMAD-dependent transcriptional activity, directly controlling key effectors of differentiation, including miRNAs which in turn directly repress its expression. Plays a role in estrogen and testosterone signaling pathway at several levels. Mediates the use of alternative promoters in estrogen-responsive genes and regulates transcription and splicing of a large number of steroid hormone target genes. Contrary to the splicing regulation activity, transcriptional coregulation of the estrogen receptor ESR1 is helicase activity-independent. Plays a role in innate immunity. Specifically restricts bunyavirus infection, including Rift Valley fever virus (RVFV) or La Crosse virus (LACV), but not vesicular stomatitis virus (VSV), in an interferon- and DROSHA-independent manner. Binds to RVFV RNA, likely via structured viral RNA elements. Promotes mRNA degradation mediated by the antiviral zinc-finger protein ZC3HAV1, in an ATPase-dependent manner. This chain is Probable ATP-dependent RNA helicase DDX17 (Ddx17), found in Mus musculus (Mouse).